We begin with the raw amino-acid sequence, 743 residues long: Phosphoribosylformylglycinamidine synthase subunit PurL (743 aa).

Histidine 50 is an active-site residue. Positions 53 and 92 each coordinate ATP. Residue glutamate 94 participates in Mg(2+) binding. Substrate-binding positions include 95–98 (SHNH) and arginine 117. Residue histidine 96 is the Proton acceptor of the active site. Aspartate 118 is a binding site for Mg(2+). Position 241 (glutamine 241) interacts with substrate. Residue aspartate 269 coordinates Mg(2+). A substrate-binding site is contributed by 313–315 (ESQ). ATP-binding residues include aspartate 494 and glycine 531. Asparagine 532 lines the Mg(2+) pocket. Position 534 (serine 534) interacts with substrate.

Belongs to the FGAMS family. As to quaternary structure, monomer. Part of the FGAM synthase complex composed of 1 PurL, 1 PurQ and 2 PurS subunits.

The protein localises to the cytoplasm. The catalysed reaction is N(2)-formyl-N(1)-(5-phospho-beta-D-ribosyl)glycinamide + L-glutamine + ATP + H2O = 2-formamido-N(1)-(5-O-phospho-beta-D-ribosyl)acetamidine + L-glutamate + ADP + phosphate + H(+). Its pathway is purine metabolism; IMP biosynthesis via de novo pathway; 5-amino-1-(5-phospho-D-ribosyl)imidazole from N(2)-formyl-N(1)-(5-phospho-D-ribosyl)glycinamide: step 1/2. Functionally, part of the phosphoribosylformylglycinamidine synthase complex involved in the purines biosynthetic pathway. Catalyzes the ATP-dependent conversion of formylglycinamide ribonucleotide (FGAR) and glutamine to yield formylglycinamidine ribonucleotide (FGAM) and glutamate. The FGAM synthase complex is composed of three subunits. PurQ produces an ammonia molecule by converting glutamine to glutamate. PurL transfers the ammonia molecule to FGAR to form FGAM in an ATP-dependent manner. PurS interacts with PurQ and PurL and is thought to assist in the transfer of the ammonia molecule from PurQ to PurL. In Rhizobium meliloti (strain 1021) (Ensifer meliloti), this protein is Phosphoribosylformylglycinamidine synthase subunit PurL.